The following is a 210-amino-acid chain: Thiamine-phosphate synthase (210 aa).

4-amino-2-methyl-5-(diphosphooxymethyl)pyrimidine-binding positions include 36–40 and N68; that span reads QLREK. Residues D69 and D88 each contribute to the Mg(2+) site. S107 is a 4-amino-2-methyl-5-(diphosphooxymethyl)pyrimidine binding site. Position 133 to 135 (133 to 135) interacts with 2-[(2R,5Z)-2-carboxy-4-methylthiazol-5(2H)-ylidene]ethyl phosphate; the sequence is TGS. K136 serves as a coordination point for 4-amino-2-methyl-5-(diphosphooxymethyl)pyrimidine. 2-[(2R,5Z)-2-carboxy-4-methylthiazol-5(2H)-ylidene]ethyl phosphate contacts are provided by residues G164 and 184-185; that span reads IS.

Belongs to the thiamine-phosphate synthase family. The cofactor is Mg(2+).

It catalyses the reaction 2-[(2R,5Z)-2-carboxy-4-methylthiazol-5(2H)-ylidene]ethyl phosphate + 4-amino-2-methyl-5-(diphosphooxymethyl)pyrimidine + 2 H(+) = thiamine phosphate + CO2 + diphosphate. The catalysed reaction is 2-(2-carboxy-4-methylthiazol-5-yl)ethyl phosphate + 4-amino-2-methyl-5-(diphosphooxymethyl)pyrimidine + 2 H(+) = thiamine phosphate + CO2 + diphosphate. It carries out the reaction 4-methyl-5-(2-phosphooxyethyl)-thiazole + 4-amino-2-methyl-5-(diphosphooxymethyl)pyrimidine + H(+) = thiamine phosphate + diphosphate. Its pathway is cofactor biosynthesis; thiamine diphosphate biosynthesis; thiamine phosphate from 4-amino-2-methyl-5-diphosphomethylpyrimidine and 4-methyl-5-(2-phosphoethyl)-thiazole: step 1/1. Functionally, condenses 4-methyl-5-(beta-hydroxyethyl)thiazole monophosphate (THZ-P) and 2-methyl-4-amino-5-hydroxymethyl pyrimidine pyrophosphate (HMP-PP) to form thiamine monophosphate (TMP). In Moorella thermoacetica (strain ATCC 39073 / JCM 9320), this protein is Thiamine-phosphate synthase.